The primary structure comprises 561 residues: Asparagine synthetase [glutamine-hydrolyzing] (561 aa).

Catalysis depends on Cys-2, which acts as the For GATase activity. One can recognise a Glutamine amidotransferase type-2 domain in the interval 2–191; it reads CGIWALFGSD…PGHYEVLDLK (190 aa). L-glutamine-binding positions include 49–53, 75–77, and Asp-97; these read RLAVV and NGE. The 324-residue stretch at 213 to 536 folds into the Asparagine synthetase domain; the sequence is HAIYDSVEKL…PGRADWLTHY (324 aa). ATP is bound by residues Leu-256, Ile-288, and 363–364; that span reads SG. Lys-385 carries the post-translational modification N6-acetyllysine. Thr-545 carries the post-translational modification Phosphothreonine. At Ser-557 the chain carries Phosphoserine.

It carries out the reaction L-aspartate + L-glutamine + ATP + H2O = L-asparagine + L-glutamate + AMP + diphosphate + H(+). Its pathway is amino-acid biosynthesis; L-asparagine biosynthesis; L-asparagine from L-aspartate (L-Gln route): step 1/1. This chain is Asparagine synthetase [glutamine-hydrolyzing] (Asns), found in Rattus norvegicus (Rat).